The chain runs to 537 residues: Asparagine-rich protein (537 aa).

Disordered regions lie at residues 1 to 22 (YNNN…QNTN), 187 to 254 (NMNI…NNNF), 336 to 372 (YNNN…YGYD), 399 to 479 (LNNN…DDWG), and 509 to 528 (DLSK…MKKD). Low complexity-rich tracts occupy residues 336–347 (YNNNESNTANPN) and 399–469 (LNNN…NQNN). The segment covering 470–479 (NEDEDDDDWG) has biased composition (acidic residues). Over residues 509–518 (DLSKKGNDGK) the composition is skewed to basic and acidic residues.

The chain is Asparagine-rich protein from Plasmodium falciparum.